Reading from the N-terminus, the 207-residue chain is NAD(P)H dehydrogenase (quinone) (207 aa).

The Flavodoxin-like domain occupies 3–194 (VQIIFYSMYG…EMAKFQGRHV (192 aa)). Residues 9-14 (SMYGHI) and 82-84 (TRF) contribute to the FMN site. Tyr-11 is an NAD(+) binding site. Trp-102 lines the substrate pocket. FMN contacts are provided by residues 117–123 (STATQHG) and His-138.

The protein belongs to the WrbA family. It depends on FMN as a cofactor.

It carries out the reaction a quinone + NADH + H(+) = a quinol + NAD(+). The enzyme catalyses a quinone + NADPH + H(+) = a quinol + NADP(+). The chain is NAD(P)H dehydrogenase (quinone) from Aromatoleum aromaticum (strain DSM 19018 / LMG 30748 / EbN1) (Azoarcus sp. (strain EbN1)).